A 157-amino-acid chain; its full sequence is 17.8 kDa class I heat shock protein (157 aa).

The region spanning 41–156 is the sHSP domain; the sequence is ETSAITNARV…KAQVKSIDIS (116 aa).

This sequence belongs to the small heat shock protein (HSP20) family. As to quaternary structure, homodimer under normal physiological conditions. Aggregates in high oligomeric complexes after heat shock. Binds to AKR2A and to chloroplasts. Expressed ubiquitously at low levels under normal physiological conditions.

It is found in the cytoplasm. Its function is as follows. Cytosolic mediator for sorting and targeting of nascent chloroplast outer envelope membrane (OEM) proteins to the chloroplast. Functions as an AKR2A cofactor to facilitate the targeting of OEP7 to chloroplasts. The chain is 17.8 kDa class I heat shock protein (HSP17.8) from Arabidopsis thaliana (Mouse-ear cress).